A 52-amino-acid polypeptide reads, in one-letter code: uncharacterized protein (52 aa).

A disordered region spans residues 1–52 (MVNNDAKIGRREFYDRVESVRPKSPPRERPTYTYSNSRTVDGYSNRGPRADF). Over residues 7-30 (KIGRREFYDRVESVRPKSPPRERP) the composition is skewed to basic and acidic residues.

This is an uncharacterized protein from Dictyostelium discoideum (Social amoeba).